A 259-amino-acid chain; its full sequence is Hydroxyacylglutathione hydrolase (259 aa).

Positions 56, 58, 60, 61, 112, 133, and 171 each coordinate Zn(2+).

Belongs to the metallo-beta-lactamase superfamily. Glyoxalase II family. Monomer. Requires Zn(2+) as cofactor.

The enzyme catalyses an S-(2-hydroxyacyl)glutathione + H2O = a 2-hydroxy carboxylate + glutathione + H(+). It participates in secondary metabolite metabolism; methylglyoxal degradation; (R)-lactate from methylglyoxal: step 2/2. Thiolesterase that catalyzes the hydrolysis of S-D-lactoyl-glutathione to form glutathione and D-lactic acid. The polypeptide is Hydroxyacylglutathione hydrolase (Pseudomonas putida (strain W619)).